The following is a 196-amino-acid chain: 3-isopropylmalate dehydratase small subunit (196 aa).

Belongs to the LeuD family. LeuD type 1 subfamily. As to quaternary structure, heterodimer of LeuC and LeuD.

The enzyme catalyses (2R,3S)-3-isopropylmalate = (2S)-2-isopropylmalate. It participates in amino-acid biosynthesis; L-leucine biosynthesis; L-leucine from 3-methyl-2-oxobutanoate: step 2/4. In terms of biological role, catalyzes the isomerization between 2-isopropylmalate and 3-isopropylmalate, via the formation of 2-isopropylmaleate. The chain is 3-isopropylmalate dehydratase small subunit from Streptococcus gordonii (strain Challis / ATCC 35105 / BCRC 15272 / CH1 / DL1 / V288).